The chain runs to 375 residues: Anhydro-N-acetylmuramic acid kinase (375 aa).

Position 12–19 (12–19) interacts with ATP; the sequence is GTSLDGVD.

This sequence belongs to the anhydro-N-acetylmuramic acid kinase family.

It carries out the reaction 1,6-anhydro-N-acetyl-beta-muramate + ATP + H2O = N-acetyl-D-muramate 6-phosphate + ADP + H(+). It functions in the pathway amino-sugar metabolism; 1,6-anhydro-N-acetylmuramate degradation. The protein operates within cell wall biogenesis; peptidoglycan recycling. In terms of biological role, catalyzes the specific phosphorylation of 1,6-anhydro-N-acetylmuramic acid (anhMurNAc) with the simultaneous cleavage of the 1,6-anhydro ring, generating MurNAc-6-P. Is required for the utilization of anhMurNAc either imported from the medium or derived from its own cell wall murein, and thus plays a role in cell wall recycling. This chain is Anhydro-N-acetylmuramic acid kinase, found in Variovorax paradoxus (strain S110).